Reading from the N-terminus, the 387-residue chain is Phosphoglycerate kinase (387 aa).

Substrate is bound by residues 21–23 (DLN), Arg36, 59–62 (HLGR), Arg113, and Arg146. ATP is bound by residues Lys197, Glu314, and 340–343 (GGDT).

This sequence belongs to the phosphoglycerate kinase family. In terms of assembly, monomer.

It is found in the cytoplasm. The catalysed reaction is (2R)-3-phosphoglycerate + ATP = (2R)-3-phospho-glyceroyl phosphate + ADP. It functions in the pathway carbohydrate degradation; glycolysis; pyruvate from D-glyceraldehyde 3-phosphate: step 2/5. In Aeromonas hydrophila subsp. hydrophila (strain ATCC 7966 / DSM 30187 / BCRC 13018 / CCUG 14551 / JCM 1027 / KCTC 2358 / NCIMB 9240 / NCTC 8049), this protein is Phosphoglycerate kinase.